Reading from the N-terminus, the 246-residue chain is NAD(P)H-quinone oxidoreductase subunit K, organellar chromatophore (246 aa).

[4Fe-4S] cluster is bound by residues Cys-58, Cys-59, Cys-123, and Cys-154.

Belongs to the complex I 20 kDa subunit family. As to quaternary structure, NDH-1 is composed of 14 different subunits. Subunits nuoB, C, D, E, F, and G constitute the peripheral sector of the complex. [4Fe-4S] cluster is required as a cofactor.

It localises to the plastid. The protein resides in the organellar chromatophore thylakoid membrane. The enzyme catalyses a quinone + NADH + H(+) = a quinol + NAD(+). Functionally, NDH-1 shuttles electrons from NADH, via FMN and iron-sulfur (Fe-S) centers, to quinones in the respiratory chain. Couples the redox reaction to proton translocation (for every two electrons transferred, four hydrogen ions are translocated across the cytoplasmic membrane), and thus conserves the redox energy in a proton gradient. The sequence is that of NAD(P)H-quinone oxidoreductase subunit K, organellar chromatophore from Paulinella chromatophora.